The chain runs to 197 residues: Probable GTP-binding protein EngB (197 aa).

An EngB-type G domain is found at 22–195 (GFPEIGLAGR…WQWIEAHTVG (174 aa)). GTP contacts are provided by residues 30 to 37 (GRSNVGKS), 57 to 61 (GKTQT), 75 to 78 (DVPG), 142 to 145 (TKSD), and 174 to 176 (FSA). The Mg(2+) site is built by serine 37 and threonine 59.

It belongs to the TRAFAC class TrmE-Era-EngA-EngB-Septin-like GTPase superfamily. EngB GTPase family. Mg(2+) serves as cofactor.

Its function is as follows. Necessary for normal cell division and for the maintenance of normal septation. The sequence is that of Probable GTP-binding protein EngB from Lactiplantibacillus plantarum (strain ATCC BAA-793 / NCIMB 8826 / WCFS1) (Lactobacillus plantarum).